The sequence spans 342 residues: UDP-N-acetylglucosamine transporter YEA4 (342 aa).

The Cytoplasmic segment spans residues 1–6; that stretch reads MWNSLK. The chain crosses the membrane as a helical span at residues 7–27; that stretch reads AFALVFGGCCSNVITFETLMS. Residues 28–35 lie on the Lumenal side of the membrane; that stretch reads NETGSINN. The chain crosses the membrane as a helical span at residues 36–56; the sequence is LITFCQFLFVTCQGLPEFLDV. Topologically, residues 57–61 are cytoplasmic; that stretch reads HQPFP. The helical transmembrane segment at 62-82 threads the bilayer; it reads YFKPLKTPLHVYVITVVLFYI. The Lumenal segment spans residues 83–96; the sequence is SSTTNNNVFKYNIS. The chain crosses the membrane as a helical span at residues 97-117; that stretch reads IPIHIVFRCFGTVITMFTCWL. The Cytoplasmic portion of the chain corresponds to 118–123; the sequence is LNGRKY. Residues 124-144 form a helical membrane-spanning segment; that stretch reads TKIQILSTLFLTIGAIIASLF. Topologically, residues 145–168 are lumenal; that stretch reads KDADFRYQDLKLQAWKIGSDQSVD. The chain crosses the membrane as a helical span at residues 169–189; it reads LTFIFGICILVLSSFTSSLLS. Over 190–253 the chain is Cytoplasmic; sequence AYNERTYQKY…GGKILVPREE (64 aa). A helical transmembrane segment spans residues 254–274; that stretch reads TLLLFNVLTQYFCVKGVNILA. Residues 275 to 307 are Lumenal-facing; it reads SKTNALTLSITLLVRKFISLLLSVRLFDNNLSY. The helical transmembrane segment at 308–328 threads the bilayer; sequence TGYIGVYLVFFGAFIYSLGSI. At 329 to 342 the chain is on the cytoplasmic side; it reads HPRQNDKGAIKKSK.

This sequence belongs to the nucleotide-sugar transporter family. SLC35B subfamily.

The protein localises to the endoplasmic reticulum. It is found in the endoplasmic reticulum membrane. Functionally, sugar transporter that specifically mediates the transport of UDP-N-acetylglucosamine (UDP-GlcNAc) and is required for cell wall chitin synthesis. This chain is UDP-N-acetylglucosamine transporter YEA4 (YEA4), found in Saccharomyces cerevisiae (strain ATCC 204508 / S288c) (Baker's yeast).